We begin with the raw amino-acid sequence, 252 residues long: Trans-aconitate 2-methyltransferase (252 aa).

Belongs to the methyltransferase superfamily. Tam family.

It is found in the cytoplasm. The catalysed reaction is trans-aconitate + S-adenosyl-L-methionine = (E)-3-(methoxycarbonyl)pent-2-enedioate + S-adenosyl-L-homocysteine. Functionally, catalyzes the S-adenosylmethionine monomethyl esterification of trans-aconitate. In Escherichia coli O1:K1 / APEC, this protein is Trans-aconitate 2-methyltransferase.